Here is a 296-residue protein sequence, read N- to C-terminus: Claudin-23 (296 aa).

Residues 1 to 2 (MR) lie on the Cytoplasmic side of the membrane. A helical membrane pass occupies residues 3–23 (TPVVMTLGMVLTPCGLLLNLV). Over 24 to 81 (STLAPGWRLVKGFLDQPVDVVLYQGLWDICREQSSRERECGQPDEWNYFQTQPVQVAR) the chain is Extracellular. The helical transmembrane segment at 82-102 (GLMITSLATTALGLLLASLGV) threads the bilayer. Residues 103–111 (RCWQDEPHY) lie on the Cytoplasmic side of the membrane. The helical transmembrane segment at 112–132 (GLAGLSGVVFFVAGLFSLIPV) threads the bilayer. Residues 133–160 (SWYNHFLSDPDVLAAPSSPVTVQVSYSL) lie on the Extracellular side of the membrane. The chain crosses the membrane as a helical span at residues 161–181 (VLGYLGSCLLLLGGFSLALSF). The Cytoplasmic segment spans residues 182 to 296 (APWCEERCRR…QNSLPCDSDL (115 aa)). Positions 224–296 (YSDGQHRPPP…QNSLPCDSDL (73 aa)) are disordered. Residues 273 to 284 (TSQGGSSSRSTR) show a composition bias toward low complexity. The span at 285–296 (PCQNSLPCDSDL) shows a compositional bias: polar residues.

Belongs to the claudin family.

It localises to the cell junction. The protein resides in the tight junction. The protein localises to the cell membrane. Its function is as follows. Plays a major role in tight junction-specific obliteration of the intercellular space, through calcium-independent cell-adhesion activity. This chain is Claudin-23 (Cldn23), found in Mus musculus (Mouse).